The following is a 390-amino-acid chain: tRNA-specific 2-thiouridylase MnmA (390 aa).

Residues 36–43 (GMSGGVDS) and M62 each bind ATP. The segment at 122–124 (NPD) is interaction with target base in tRNA. C127 (nucleophile) is an active-site residue. Cysteines 127 and 223 form a disulfide. G151 is a binding site for ATP. The segment at 173-175 (KDQ) is interaction with tRNA. The Cysteine persulfide intermediate role is filled by C223. Residues 335–336 (RY) are interaction with tRNA.

This sequence belongs to the MnmA/TRMU family.

The protein localises to the cytoplasm. It catalyses the reaction S-sulfanyl-L-cysteinyl-[protein] + uridine(34) in tRNA + AH2 + ATP = 2-thiouridine(34) in tRNA + L-cysteinyl-[protein] + A + AMP + diphosphate + H(+). In terms of biological role, catalyzes the 2-thiolation of uridine at the wobble position (U34) of tRNA, leading to the formation of s(2)U34. The polypeptide is tRNA-specific 2-thiouridylase MnmA (Marinomonas sp. (strain MWYL1)).